The primary structure comprises 102 residues: UPF0122 protein MPN_424 (102 aa).

The protein belongs to the UPF0122 family.

In terms of biological role, might take part in the signal recognition particle (SRP) pathway. This is inferred from the conservation of its genetic proximity to ftsY/ffh. May be a regulatory protein. The polypeptide is UPF0122 protein MPN_424 (Mycoplasma pneumoniae (strain ATCC 29342 / M129 / Subtype 1) (Mycoplasmoides pneumoniae)).